Here is a 138-residue protein sequence, read N- to C-terminus: Putative pre-16S rRNA nuclease (138 aa).

The protein belongs to the YqgF nuclease family.

The protein resides in the cytoplasm. Its function is as follows. Could be a nuclease involved in processing of the 5'-end of pre-16S rRNA. In Clostridium tetani (strain Massachusetts / E88), this protein is Putative pre-16S rRNA nuclease.